The chain runs to 93 residues: Small ribosomal subunit protein uS19 (93 aa).

It belongs to the universal ribosomal protein uS19 family.

Its function is as follows. Protein S19 forms a complex with S13 that binds strongly to the 16S ribosomal RNA. The chain is Small ribosomal subunit protein uS19 from Renibacterium salmoninarum (strain ATCC 33209 / DSM 20767 / JCM 11484 / NBRC 15589 / NCIMB 2235).